Reading from the N-terminus, the 89-residue chain is UPF0298 protein GTNG_0961 (89 aa).

The protein belongs to the UPF0298 family.

The protein localises to the cytoplasm. The protein is UPF0298 protein GTNG_0961 of Geobacillus thermodenitrificans (strain NG80-2).